We begin with the raw amino-acid sequence, 234 residues long: tRNA (guanine-N(1)-)-methyltransferase (234 aa).

S-adenosyl-L-methionine is bound by residues Gly-112 and 132 to 137 (IGDFIL).

This sequence belongs to the RNA methyltransferase TrmD family. In terms of assembly, homodimer.

The protein localises to the cytoplasm. The enzyme catalyses guanosine(37) in tRNA + S-adenosyl-L-methionine = N(1)-methylguanosine(37) in tRNA + S-adenosyl-L-homocysteine + H(+). In terms of biological role, specifically methylates guanosine-37 in various tRNAs. This is tRNA (guanine-N(1)-)-methyltransferase from Campylobacter jejuni subsp. doylei (strain ATCC BAA-1458 / RM4099 / 269.97).